A 298-amino-acid polypeptide reads, in one-letter code: MLKIGSHVSMSGKKMLLAASEEAVSYGATTFMIYTGAPQNTRRKPIEELNIEAGRKHMEQNGIEEIIVHAPYIINVGNTTKPETFQLGVDFLRMEIERTSALGVAKQIVLHPGAHVGAGADAGIQQIIKGLNEVLTPDQTVNIALETMAGKGTECGRSFEEIAKIIDGVTYNEKLSVCFDTCHTHDAGYDIVNDFDGVLNEFDKIVGIDRLQVLHINDSKNVRGAGKDRHENIGFGHIGYKALHHIVHHPQLMHVPKILETPYVGEDKKDKKPPYKLEIEMLKNGTFDEGLLEKIKAQ.

Positions 69, 111, 146, 180, 183, 215, 228, 230, and 260 each coordinate Zn(2+).

It belongs to the AP endonuclease 2 family. It depends on Zn(2+) as a cofactor.

It catalyses the reaction Endonucleolytic cleavage to 5'-phosphooligonucleotide end-products.. In terms of biological role, endonuclease IV plays a role in DNA repair. It cleaves phosphodiester bonds at apurinic or apyrimidinic (AP) sites, generating a 3'-hydroxyl group and a 5'-terminal sugar phosphate. The chain is Probable endonuclease 4 from Bacillus cereus (strain AH187).